Here is a 188-residue protein sequence, read N- to C-terminus: Transmembrane protein 160 (188 aa).

The N-terminal 96 residues, 1 to 96, are a transit peptide targeting the mitochondrion; the sequence is MGGGWWWARA…ISFMQSDMGR (96 aa). The disordered stretch occupies residues 24–52; it reads PPQRPRSGGARGSFAPGHGPRAGASPPPV. Residue S48 is modified to Phosphoserine. The next 2 helical transmembrane spans lie at 102 to 122 and 135 to 155; these read FFLL…VGLA and AAVG…AVGL. The tract at residues 168-188 is disordered; that stretch reads PEDDGTASAEGPDEAGRPPPE.

Belongs to the TMEM160 family.

It localises to the mitochondrion inner membrane. The polypeptide is Transmembrane protein 160 (Homo sapiens (Human)).